Reading from the N-terminus, the 331-residue chain is Major ferric iron-binding protein (331 aa).

A signal peptide spans Met-1–Ala-22. Fe cation is bound by residues His-31, Glu-79, Tyr-217, and Tyr-218.

It belongs to the bacterial solute-binding protein 1 family.

It localises to the periplasm. In terms of biological role, this protein may be a central component in the iron-acquisition system. The polypeptide is Major ferric iron-binding protein (fbpA) (Neisseria meningitidis serogroup B (strain ATCC BAA-335 / MC58)).